We begin with the raw amino-acid sequence, 324 residues long: Viral cathepsin (324 aa).

The N-terminal stretch at 1–18 is a signal peptide; sequence MNKIVLYLLIYVGTFSAA. The propeptide at 19–113 is activation peptide; the sequence is YDLLKAPSYF…VVLNRPPDKG (95 aa). 3 cysteine pairs are disulfide-bonded: cysteine 134/cysteine 175, cysteine 168/cysteine 208, and cysteine 263/cysteine 311. Residue cysteine 137 is part of the active site. Residue asparagine 159 is glycosylated (N-linked (GlcNAc...) asparagine; by host). Active-site residues include histidine 270 and asparagine 290.

The protein belongs to the peptidase C1 family. Post-translationally, synthesized as an inactive proenzyme and activated by proteolytic removal of the inhibitory propeptide.

It carries out the reaction Endopeptidase of broad specificity, hydrolyzing substrates of both cathepsin L and cathepsin B.. Cysteine protease that plays an essential role in host liquefaction to facilitate horizontal transmission of the virus. May participate in the degradation of foreign protein expressed by the baculovirus system. The chain is Viral cathepsin (Vcath) from Choristoneura fumiferana defective polyhedrosis virus (Cfdef).